A 365-amino-acid polypeptide reads, in one-letter code: 3-amino-4-hydroxybenzoate 4-O-methyltransferase (365 aa).

Residues 1–18 (MTVPENAQHTAPDQTQHT) show a composition bias toward polar residues. The interval 1 to 32 (MTVPENAQHTAPDQTQHTAPDRTRQAQQAAPD) is disordered. Residues D227, 253-255 (GDF), and R270 each bind S-adenosyl-L-methionine. H273 (proton acceptor) is an active-site residue.

The protein belongs to the class I-like SAM-binding methyltransferase superfamily. Cation-independent O-methyltransferase family.

It catalyses the reaction 3-amino-2,4-dihydroxybenzoate + S-adenosyl-L-methionine = 3-amino-2-hydroxy-4-methoxybenzoate + S-adenosyl-L-homocysteine + H(+). Its pathway is antibiotic biosynthesis. Its function is as follows. Part of a gene cluster involved in the biosynthesis of cremeomycin, a light-sensitive o-diazoquinone with antibacterial and antiproliferative effects. Catalyzes the methylation of the C4 hydroxyl group of 3-amino-2,4-dihydroxybenzoate (3,2,4-ADHBA) to form 3-amino-2-hydroxy-4-methoxybenzoate (3,2,4-AHMBA). In vitro, can also catalyze the methylation of 3-amino-4-hydroxybenzoate (3,4-AHBA). In Streptomyces cremeus, this protein is 3-amino-4-hydroxybenzoate 4-O-methyltransferase.